A 257-amino-acid chain; its full sequence is Sad1-interacting factor 1 (257 aa).

Positions 16-68 (LNKIKQGGASRINQILGQNSDDSQSDVRATASEEAVHSETATPVTPMSSGFME) are disordered. 2 stretches are compositionally biased toward polar residues: residues 26–37 (RINQILGQNSDD) and 54–63 (ETATPVTPMS). Serine 35 carries the phosphoserine modification. Position 132 is a phosphoserine (serine 132). Threonine 134 is subject to Phosphothreonine. 2 helical membrane passes run 160 to 180 (LLAISIVVIVCYFKHLPLLPW) and 231 to 251 (FTQLITDACMTIFALGLCCYF).

Interacts with kms1 and sad1.

Its subcellular location is the membrane. The chain is Sad1-interacting factor 1 (sif1) from Schizosaccharomyces pombe (strain 972 / ATCC 24843) (Fission yeast).